Here is a 294-residue protein sequence, read N- to C-terminus: Probable metallo-hydrolase BURPS1710b_2304 (294 aa).

Positions 68, 70, 72, 73, 143, 170, and 212 each coordinate a divalent metal cation.

It belongs to the metallo-beta-lactamase superfamily. It depends on a divalent metal cation as a cofactor.

Probable hydrolase. Does not have beta-lactamase activity. This Burkholderia pseudomallei (strain 1710b) protein is Probable metallo-hydrolase BURPS1710b_2304.